The sequence spans 359 residues: Guanine nucleotide-binding protein subunit alpha-11 (359 aa).

S-palmitoyl cysteine attachment occurs at residues cysteine 9 and cysteine 10. In terms of domain architecture, G-alpha spans arginine 38 to valine 359. The interval lysine 41–threonine 54 is G1 motif. Residues glycine 46–serine 53 and leucine 180–arginine 183 each bind GTP. Serine 53 lines the Mg(2+) pocket. The interval aspartate 178 to threonine 186 is G2 motif. Residue threonine 186 participates in Mg(2+) binding. A G3 motif region spans residues phenylalanine 201 to arginine 210. The G4 motif stretch occupies residues isoleucine 270–aspartate 277. GTP-binding positions include asparagine 274–aspartate 277 and alanine 331. The segment at threonine 329–threonine 334 is G5 motif.

It belongs to the G-alpha family. G(q) subfamily. G proteins are composed of 3 units; alpha, beta and gamma. The alpha chain contains the guanine nucleotide binding site. Interacts with RGS22. Interacts with NTSR1.

The protein localises to the cell membrane. It localises to the cytoplasm. It catalyses the reaction GTP + H2O = GDP + phosphate + H(+). In terms of biological role, guanine nucleotide-binding proteins (G proteins) function as transducers downstream of G protein-coupled receptors (GPCRs) in numerous signaling cascades. The alpha chain contains the guanine nucleotide binding site and alternates between an active, GTP-bound state and an inactive, GDP-bound state. Signaling by an activated GPCR promotes GDP release and GTP binding. The alpha subunit has a low GTPase activity that converts bound GTP to GDP, thereby terminating the signal. Both GDP release and GTP hydrolysis are modulated by numerous regulatory proteins. Signaling is mediated via phospholipase C-beta-dependent inositol lipid hydrolysis for signal propagation: activates phospholipase C-beta: following GPCR activation, GNA11 activates PLC-beta (PLCB1, PLCB2, PLCB3 or PLCB4), leading to production of diacylglycerol (DAG) and inositol 1,4,5-trisphosphate (IP3). Transduces FFAR4 signaling in response to long-chain fatty acids (LCFAs). Together with GNAQ, required for heart development. In the respiratory epithelium, transmits OXGR1-dependent signals that lead to downstream intracellular Ca(2+) release and mucocilliary clearance of airborne pathogens. In Mus musculus (Mouse), this protein is Guanine nucleotide-binding protein subunit alpha-11 (Gna11).